A 425-amino-acid polypeptide reads, in one-letter code: UDP-N-acetylglucosamine 1-carboxyvinyltransferase (425 aa).

22–23 (KN) contributes to the phosphoenolpyruvate binding site. Arg-93 is a UDP-N-acetyl-alpha-D-glucosamine binding site. Catalysis depends on Cys-117, which acts as the Proton donor. Cys-117 carries the post-translational modification 2-(S-cysteinyl)pyruvic acid O-phosphothioketal. UDP-N-acetyl-alpha-D-glucosamine contacts are provided by residues 122–126 (RPIDL), Asp-307, and Val-329.

It belongs to the EPSP synthase family. MurA subfamily.

It is found in the cytoplasm. It catalyses the reaction phosphoenolpyruvate + UDP-N-acetyl-alpha-D-glucosamine = UDP-N-acetyl-3-O-(1-carboxyvinyl)-alpha-D-glucosamine + phosphate. Its pathway is cell wall biogenesis; peptidoglycan biosynthesis. In terms of biological role, cell wall formation. Adds enolpyruvyl to UDP-N-acetylglucosamine. The chain is UDP-N-acetylglucosamine 1-carboxyvinyltransferase from Prosthecochloris aestuarii (strain DSM 271 / SK 413).